A 174-amino-acid polypeptide reads, in one-letter code: MSGPSPTYVTFDTSVGSFTVELYTAHAPKTCNNFAKLAERGYYNGVIFHRIIPNFMIQGGDPTGTGRGGTSIYGDRFADEIHPELRFVGAGILAMANSGPNTNGSQFFITCAPTPYLDGKHTIFGRVSSGMKTIQRLEAVRTDKDDRPVEEIKIHRARLGDATQGGGLAVAMPA.

In terms of domain architecture, PPIase cyclophilin-type spans 5–159 (SPTYVTFDTS…EEIKIHRARL (155 aa)).

It belongs to the cyclophilin-type PPIase family. PPIL1 subfamily.

The enzyme catalyses [protein]-peptidylproline (omega=180) = [protein]-peptidylproline (omega=0). PPIases accelerate the folding of proteins. It catalyzes the cis-trans isomerization of proline imidic peptide bonds in oligopeptides. The polypeptide is Peptidyl-prolyl cis-trans isomerase-like 1 (CYP1) (Cryptococcus neoformans var. neoformans serotype D (strain B-3501A) (Filobasidiella neoformans)).